The primary structure comprises 114 residues: Monothiol glutaredoxin-S8 (114 aa).

In terms of domain architecture, Glutaredoxin spans Met-1–Trp-113. Cys-21 lines the [2Fe-2S] cluster pocket.

This sequence belongs to the glutaredoxin family. CC-type subfamily.

Its subcellular location is the cytoplasm. Its function is as follows. May only reduce GSH-thiol disulfides, but not protein disulfides. The protein is Monothiol glutaredoxin-S8 (GRXS8) of Oryza sativa subsp. japonica (Rice).